The primary structure comprises 1353 residues: Protein timeless homolog (1353 aa).

Disordered regions lie at residues 798 to 825 (VAED…EEEV), 1150 to 1291 (KPTR…LEED), and 1306 to 1335 (GGSI…DPFT). The segment covering 802 to 825 (RAEDPDEEDPAEPYDSEQEEEEEV) has biased composition (acidic residues). 2 stretches are compositionally biased toward basic and acidic residues: residues 1150 to 1160 (KPTRQVERHLE) and 1168 to 1182 (ERSK…KFDD). Acidic residues-rich tracts occupy residues 1183–1206 (FLND…EEEE) and 1217–1226 (DSEDEEEHIE). The segment covering 1227–1239 (QEEAQKKLEKVAE) has biased composition (basic and acidic residues). 3 stretches are compositionally biased toward acidic residues: residues 1261-1273 (DSSD…DSAE), 1282-1291 (AEDDSDLEED), and 1323-1332 (EEREDDDDED).

This sequence belongs to the timeless family. In terms of assembly, associates with the cohesin complex. Interacts with smc-1, smc-3, scc-1 and scc-3.

It localises to the nucleus. Functionally, plays an important role in chromosome cohesion during both mitosis and meiosis. In prophase of meiosis, it is involved in the formation of the synaptonemal complex (SC) and specifically, in the diplotene and diakinesis phases of prophase, it stabilizes the association of homologous chromosomes during synapsis and sister chromatid cohesion. It regulates cohesin subunits to promote meiotic chromosome cohesion and localizes non-SMC (structural maintenance of chromosome) cohesin subunits to chromatin prior to or during pre-meiotic S phase. Implicated in influencing either the stability or loading of meiotic-specific cohesin subunit, rec8. Controls cell cycle exit and cell fusion to prevent the premature differentiation into adult cells. Specifically, regulates hypodermal seam cell identity. The sequence is that of Protein timeless homolog from Caenorhabditis elegans.